The primary structure comprises 291 residues: Pyridoxal kinase PdxY (291 aa).

Substrate contacts are provided by residues S9 and 44 to 45 (TQ). Residues D112, V144, E149, K182, and 207-210 (RPHL) contribute to the ATP site. D221 lines the substrate pocket.

Belongs to the pyridoxine kinase family. PdxY subfamily. In terms of assembly, homodimer. The cofactor is Mg(2+).

The enzyme catalyses pyridoxal + ATP = pyridoxal 5'-phosphate + ADP + H(+). Its pathway is cofactor metabolism; pyridoxal 5'-phosphate salvage; pyridoxal 5'-phosphate from pyridoxal: step 1/1. Functionally, pyridoxal kinase involved in the salvage pathway of pyridoxal 5'-phosphate (PLP). Catalyzes the phosphorylation of pyridoxal to PLP. The chain is Pyridoxal kinase PdxY from Photobacterium profundum (strain SS9).